Reading from the N-terminus, the 212-residue chain is Ribonuclease HII (212 aa).

Residues 20 to 209 (TCVVGVDEVG…VHNILYQEAS (190 aa)) enclose the RNase H type-2 domain. Positions 26, 27, and 117 each coordinate a divalent metal cation.

It belongs to the RNase HII family. The cofactor is Mn(2+). It depends on Mg(2+) as a cofactor.

It is found in the cytoplasm. The enzyme catalyses Endonucleolytic cleavage to 5'-phosphomonoester.. Endonuclease that specifically degrades the RNA of RNA-DNA hybrids. The protein is Ribonuclease HII of Cereibacter sphaeroides (strain ATCC 17023 / DSM 158 / JCM 6121 / CCUG 31486 / LMG 2827 / NBRC 12203 / NCIMB 8253 / ATH 2.4.1.) (Rhodobacter sphaeroides).